Reading from the N-terminus, the 467-residue chain is Zinc finger and BTB domain-containing protein 43 (467 aa).

Residue Met-1 is modified to N-acetylmethionine. The region spanning 33-97 (CDVSIVVQGH…SYTGRLVMPA (65 aa)) is the BTB domain. 2 disordered regions span residues 134–153 (LNHGSDHQSPSSSSYNGLVE) and 162–225 (HTDF…SAEF). 2 stretches are compositionally biased toward basic and acidic residues: residues 164–174 (DFPKAQELRDG) and 182–194 (KDELSSQLTEHEY). Residues Lys-182, Lys-241, Lys-247, Lys-297, and Lys-358 each participate in a glycyl lysine isopeptide (Lys-Gly) (interchain with G-Cter in SUMO2) cross-link. The C2H2-type 1; atypical zinc finger occupies 373 to 394 (YPCQCGKSFTHKSQRDRHMSMH). A C2H2-type 2 zinc finger spans residues 400-422 (YGCGVCGKKFKMKHHLVGHMKIH). Thr-423 carries the post-translational modification Phosphothreonine. The C2H2-type 3; atypical zinc finger occupies 428-450 (YECNICAKRFMWRDSFHRHVTSC). Lys-458 is covalently cross-linked (Glycyl lysine isopeptide (Lys-Gly) (interchain with G-Cter in SUMO2)).

Belongs to the krueppel C2H2-type zinc-finger protein family. Interacts with BDP1.

It is found in the nucleus. Its function is as follows. May be involved in transcriptional regulation. The polypeptide is Zinc finger and BTB domain-containing protein 43 (ZBTB43) (Homo sapiens (Human)).